Here is a 443-residue protein sequence, read N- to C-terminus: ATP-dependent protease ATPase subunit HslU (443 aa).

ATP is bound by residues Val-18 and 60–65 (GVGKTE). The interval 136–158 (LPPPRDFNEDSQRTNADSSTRQL) is disordered. Residues 148-157 (RTNADSSTRQ) are compositionally biased toward polar residues. ATP contacts are provided by Asp-256, Glu-321, and Arg-393.

It belongs to the ClpX chaperone family. HslU subfamily. In terms of assembly, a double ring-shaped homohexamer of HslV is capped on each side by a ring-shaped HslU homohexamer. The assembly of the HslU/HslV complex is dependent on binding of ATP.

It is found in the cytoplasm. ATPase subunit of a proteasome-like degradation complex; this subunit has chaperone activity. The binding of ATP and its subsequent hydrolysis by HslU are essential for unfolding of protein substrates subsequently hydrolyzed by HslV. HslU recognizes the N-terminal part of its protein substrates and unfolds these before they are guided to HslV for hydrolysis. This is ATP-dependent protease ATPase subunit HslU from Marinobacter nauticus (strain ATCC 700491 / DSM 11845 / VT8) (Marinobacter aquaeolei).